A 176-amino-acid polypeptide reads, in one-letter code: ATP synthase subunit delta (176 aa).

It belongs to the ATPase delta chain family. In terms of assembly, F-type ATPases have 2 components, F(1) - the catalytic core - and F(0) - the membrane proton channel. F(1) has five subunits: alpha(3), beta(3), gamma(1), delta(1), epsilon(1). F(0) has three main subunits: a(1), b(2) and c(10-14). The alpha and beta chains form an alternating ring which encloses part of the gamma chain. F(1) is attached to F(0) by a central stalk formed by the gamma and epsilon chains, while a peripheral stalk is formed by the delta and b chains.

It is found in the cell inner membrane. F(1)F(0) ATP synthase produces ATP from ADP in the presence of a proton or sodium gradient. F-type ATPases consist of two structural domains, F(1) containing the extramembraneous catalytic core and F(0) containing the membrane proton channel, linked together by a central stalk and a peripheral stalk. During catalysis, ATP synthesis in the catalytic domain of F(1) is coupled via a rotary mechanism of the central stalk subunits to proton translocation. In terms of biological role, this protein is part of the stalk that links CF(0) to CF(1). It either transmits conformational changes from CF(0) to CF(1) or is implicated in proton conduction. This is ATP synthase subunit delta from Campylobacter fetus subsp. fetus (strain 82-40).